A 43-amino-acid chain; its full sequence is Protein PsbN (43 aa).

Residues 4-24 (ATFVAIFISCLLISFTGYALY) traverse the membrane as a helical segment.

Belongs to the PsbN family.

It localises to the plastid. The protein resides in the chloroplast thylakoid membrane. In terms of biological role, may play a role in photosystem I and II biogenesis. This Marchantia polymorpha (Common liverwort) protein is Protein PsbN.